Consider the following 585-residue polypeptide: Zinc finger protein 614 (585 aa).

A KRAB domain is found at 8–79 (LTLEDVAVEF…DAKIQNKNCP (72 aa)). The C2H2-type 1; atypical zinc-finger motif lies at 205-227 (HACIECEQTFLRKSQLIYHENIC). The segment at 257-281 (KICIPNEYRKGSTVKSSLITHQQTH) adopts a C2H2-type 2; degenerate zinc-finger fold. C2H2-type zinc fingers lie at residues 287 to 309 (YMCS…QRTH), 315 to 337 (YVCK…QRTH), 343 to 365 (YICS…QRTH), 371 to 393 (YMCS…QRSH), 399 to 421 (YICS…QRTH), 427 to 449 (YICN…QRTH), 455 to 477 (YECN…ERCH), 483 to 505 (FVCT…QRIH), 511 to 533 (YECN…QRTH), and 539 to 561 (YGCS…KKMH).

It belongs to the krueppel C2H2-type zinc-finger protein family.

The protein localises to the nucleus. Functionally, may be involved in transcriptional regulation. In Homo sapiens (Human), this protein is Zinc finger protein 614 (ZNF614).